We begin with the raw amino-acid sequence, 142 residues long: Putative pre-16S rRNA nuclease (142 aa).

It belongs to the YqgF nuclease family.

The protein localises to the cytoplasm. Could be a nuclease involved in processing of the 5'-end of pre-16S rRNA. This chain is Putative pre-16S rRNA nuclease, found in Photobacterium profundum (strain SS9).